Reading from the N-terminus, the 341-residue chain is Uroporphyrinogen decarboxylase (341 aa).

Residues 23-27, D73, Y148, S203, and H318 contribute to the substrate site; that span reads RQAGR.

It belongs to the uroporphyrinogen decarboxylase family. As to quaternary structure, homodimer.

Its subcellular location is the cytoplasm. It catalyses the reaction uroporphyrinogen III + 4 H(+) = coproporphyrinogen III + 4 CO2. It functions in the pathway porphyrin-containing compound metabolism; protoporphyrin-IX biosynthesis; coproporphyrinogen-III from 5-aminolevulinate: step 4/4. Functionally, catalyzes the decarboxylation of four acetate groups of uroporphyrinogen-III to yield coproporphyrinogen-III. The sequence is that of Uroporphyrinogen decarboxylase from Brucella anthropi (strain ATCC 49188 / DSM 6882 / CCUG 24695 / JCM 21032 / LMG 3331 / NBRC 15819 / NCTC 12168 / Alc 37) (Ochrobactrum anthropi).